A 1457-amino-acid polypeptide reads, in one-letter code: ABC transporter G family member 36 (1457 aa).

The disordered stretch occupies residues 14 to 43; it reads RLGGSMRGDSGSMWRRGDDVFSRSSREEDD. The span at 28-39 shows a compositional bias: basic and acidic residues; sequence RRGDDVFSRSSR. The ABC transporter 1 domain occupies 164–437; it reads GNALGILPNR…FESMGFKCPD (274 aa). 197 to 204 contacts ATP; the sequence is GPPGSGKT. Positions 515-728 constitute an ABC transmembrane type-2 1 domain; that stretch reads ELLKANIDRE…AQNAISVNEL (214 aa). The next 7 membrane-spanning stretches (helical) occupy residues 533 to 553, 565 to 585, 621 to 641, 653 to 673, 677 to 697, 706 to 726, and 765 to 785; these read FVYM…MTLF, SGGI…FNGF, IPIT…VIGF, LLML…GGAA, IVAN…GGFI, WWIW…ISVN, and IGFG…TLAL. The disordered stretch occupies residues 821–841; sequence SSGSTRRPMGNGTENDSTIVD. Residues 860 to 1112 enclose the ABC transporter 2 domain; the sequence is LSFDNVRYSV…ELIKYFESIP (253 aa). ATP is bound at residue 905 to 912; sequence GVSGAGKT. In terms of domain architecture, ABC transmembrane type-2 2 spans 1185-1399; it reads TQCMACLWKQ…TLYGLVVSQF (215 aa). 7 consecutive transmembrane segments (helical) span residues 1209 to 1229, 1244 to 1264, 1292 to 1312, 1319 to 1339, 1349 to 1369, 1380 to 1400, and 1429 to 1449; these read FFFT…LGGK, YAAV…VVAV, IPYT…MIGF, FFWY…YGMM, IASI…GFVI, WYCW…SQFG, and WVAT…GFAI.

It belongs to the ABC transporter superfamily. ABCG family. PDR (TC 3.A.1.205) subfamily.

The protein localises to the membrane. May be a general defense protein. The chain is ABC transporter G family member 36 from Oryza sativa subsp. japonica (Rice).